A 148-amino-acid polypeptide reads, in one-letter code: SsrA-binding protein (148 aa).

It belongs to the SmpB family.

The protein localises to the cytoplasm. Functionally, required for rescue of stalled ribosomes mediated by trans-translation. Binds to transfer-messenger RNA (tmRNA), required for stable association of tmRNA with ribosomes. tmRNA and SmpB together mimic tRNA shape, replacing the anticodon stem-loop with SmpB. tmRNA is encoded by the ssrA gene; the 2 termini fold to resemble tRNA(Ala) and it encodes a 'tag peptide', a short internal open reading frame. During trans-translation Ala-aminoacylated tmRNA acts like a tRNA, entering the A-site of stalled ribosomes, displacing the stalled mRNA. The ribosome then switches to translate the ORF on the tmRNA; the nascent peptide is terminated with the 'tag peptide' encoded by the tmRNA and targeted for degradation. The ribosome is freed to recommence translation, which seems to be the essential function of trans-translation. The polypeptide is SsrA-binding protein (Burkholderia ambifaria (strain ATCC BAA-244 / DSM 16087 / CCUG 44356 / LMG 19182 / AMMD) (Burkholderia cepacia (strain AMMD))).